A 303-amino-acid chain; its full sequence is N-acetyl-D-glucosamine kinase (303 aa).

Residues 4–11 and 133–140 each bind ATP; these read GFDIGGTK and GVGGGLVL. Zn(2+) is bound by residues histidine 157, cysteine 177, cysteine 179, and cysteine 184.

This sequence belongs to the ROK (NagC/XylR) family. NagK subfamily.

The catalysed reaction is N-acetyl-D-glucosamine + ATP = N-acetyl-D-glucosamine 6-phosphate + ADP + H(+). It functions in the pathway cell wall biogenesis; peptidoglycan recycling. Functionally, catalyzes the phosphorylation of N-acetyl-D-glucosamine (GlcNAc) derived from cell-wall degradation, yielding GlcNAc-6-P. In Salmonella arizonae (strain ATCC BAA-731 / CDC346-86 / RSK2980), this protein is N-acetyl-D-glucosamine kinase.